A 636-amino-acid polypeptide reads, in one-letter code: 1-deoxy-D-xylulose-5-phosphate synthase (636 aa).

Thiamine diphosphate-binding positions include H72 and 113 to 115; that span reads GHA. D144 serves as a coordination point for Mg(2+). Thiamine diphosphate contacts are provided by residues 145–146, N174, Y287, and E370; that span reads GA. Residue N174 participates in Mg(2+) binding.

It belongs to the transketolase family. DXPS subfamily. As to quaternary structure, homodimer. Mg(2+) is required as a cofactor. The cofactor is thiamine diphosphate.

It catalyses the reaction D-glyceraldehyde 3-phosphate + pyruvate + H(+) = 1-deoxy-D-xylulose 5-phosphate + CO2. Its pathway is metabolic intermediate biosynthesis; 1-deoxy-D-xylulose 5-phosphate biosynthesis; 1-deoxy-D-xylulose 5-phosphate from D-glyceraldehyde 3-phosphate and pyruvate: step 1/1. Catalyzes the acyloin condensation reaction between C atoms 2 and 3 of pyruvate and glyceraldehyde 3-phosphate to yield 1-deoxy-D-xylulose-5-phosphate (DXP). This is 1-deoxy-D-xylulose-5-phosphate synthase from Crocosphaera subtropica (strain ATCC 51142 / BH68) (Cyanothece sp. (strain ATCC 51142)).